Here is a 481-residue protein sequence, read N- to C-terminus: Trichosetin biosynthesis cluster MFS transporter (481 aa).

Polar residues predominate over residues methionine 1–glutamine 13. The disordered stretch occupies residues methionine 1–leucine 63. Residues glycine 20–glutamate 31 are compositionally biased toward basic and acidic residues. A glycan (N-linked (GlcNAc...) asparagine) is linked at asparagine 64. Residues leucine 72 to alanine 92 form a helical membrane-spanning segment. Asparagine 103 carries an N-linked (GlcNAc...) asparagine glycan. The next 5 helical transmembrane spans lie at alanine 111–leucine 131, valine 147–phenylalanine 167, isoleucine 169–leucine 189, alanine 200–valine 220, and tryptophan 228–methionine 248. Asparagine 252 is a glycosylation site (N-linked (GlcNAc...) asparagine). Transmembrane regions (helical) follow at residues proline 302–phenylalanine 322, leucine 353–threonine 373, tryptophan 380–proline 400, isoleucine 403–leucine 423, and glycine 446–phenylalanine 466.

This sequence belongs to the major facilitator superfamily.

The protein resides in the cell membrane. Its function is as follows. Efflux pump required for efficient secretion of trichosetin or other secondary metabolies produced by the trichosetin gene cluster. Plays a crucial role in detoxification of the toxic trichosetin in Gibberella fujikuroi cells. In Gibberella fujikuroi (strain CBS 195.34 / IMI 58289 / NRRL A-6831) (Bakanae and foot rot disease fungus), this protein is Trichosetin biosynthesis cluster MFS transporter.